Here is an 842-residue protein sequence, read N- to C-terminus: MPLSYQHFRRLLLLDEEAGPLEEELPRLADEDLNRRVAEDLHLQLPNVSIPWTHKVGNFTGLYSSTIPVFNPDWQTPSFPNIHLHQDIITKCEQFVGPLTVNEKRRLKLVMPARFFPNSTKYLPLDKGIKPYYPENVVNHYFQTRHYLHTLWKAGILYKRETSRSASFCGSPYTWEQDLQHGAFLDGPSRVGKEPFRQQSSRIPSRSPVGPSIQSKYQQSRLGLQSQKGPLARGQQGRSWSLWTRVHPSTRRPFGVEPSVSGHTNNFASRSASCLHQSSVREAAYSHLSTTKRQSSSGHAVELYSIPPSSTKSQSQGPVFSCWWLQFRDSEPCSDYCLSHLVNLLQDWGPCTEHGEHHIRIPRTPARVTGGVFLVDKNPHNTAESRLVVDFSQFSRGSARVSWPKFAVPNLQSLTNLLSSNLSWLSLDVSAAFYHIPLHPAAMPHLLVGSSGLSRYVARLSSDSRILDHQYGTLQNLHDSCSRQLYVSLMLLYKTFGRKLHLYSHPIILGFRKIPMGVGLSPFLLAQFTSAICSVVRRAFPHCLAFSYMDDVVLGAKSVQHLESLYTAVTNFLLSLGIHLNPNKTKRWGYSLNFMGYVIGSWGTLPQEHITQKIKQCFRKLPVNRPIDWKVCQRITGLLGFAAPFTQCGYPALMPLYACIQAKQAFTFSPTYKAFLCKQYMNLYPVARQRPGLCQVFADATPTGWGLAIGHQRMRGTFVAPLPIHTAELLAACFARSRSGAKLIGTDNSVVLSRKYTSFPWLLGCAANWILRGTSFVYVPSALNPADDPSRGRLGLCRPLLRLPFLPTTGRTSLYAVSPSVPSHLPDRVHFASPLHVTWKPP.

A terminal protein domain (TP) region spans residues 1–177; the sequence is MPLSYQHFRR…FCGSPYTWEQ (177 aa). Positions 178–345 are spacer; it reads DLQHGAFLDG…YCLSHLVNLL (168 aa). Positions 184–238 are disordered; sequence FLDGPSRVGKEPFRQQSSRIPSRSPVGPSIQSKYQQSRLGLQSQKGPLARGQQGR. The span at 197 to 208 shows a compositional bias: low complexity; the sequence is RQQSSRIPSRSP. Residues 212–228 are compositionally biased toward polar residues; that stretch reads SIQSKYQQSRLGLQSQK. The interval 346-689 is polymerase/reverse transcriptase domain (RT); sequence QDWGPCTEHG…YMNLYPVARQ (344 aa). Residues 356 to 599 form the Reverse transcriptase domain; the sequence is EHHIRIPRTP…YSLNFMGYVI (244 aa). 3 residues coordinate Mg(2+): Asp-428, Asp-550, and Asp-551.

Belongs to the hepadnaviridae P protein family.

The enzyme catalyses DNA(n) + a 2'-deoxyribonucleoside 5'-triphosphate = DNA(n+1) + diphosphate. It catalyses the reaction Endonucleolytic cleavage to 5'-phosphomonoester.. Activated by host HSP70 and HSP40 in vitro to be able to bind the epsilon loop of the pgRNA. Because deletion of the RNase H region renders the protein partly chaperone-independent, the chaperones may be needed indirectly to relieve occlusion of the RNA-binding site by this domain. Inhibited by several reverse-transcriptase inhibitors: Lamivudine, Adefovir and Entecavir. In terms of biological role, multifunctional enzyme that converts the viral RNA genome into dsDNA in viral cytoplasmic capsids. This enzyme displays a DNA polymerase activity that can copy either DNA or RNA templates, and a ribonuclease H (RNase H) activity that cleaves the RNA strand of RNA-DNA heteroduplexes in a partially processive 3'- to 5'-endonucleasic mode. Neo-synthesized pregenomic RNA (pgRNA) are encapsidated together with the P protein, and reverse-transcribed inside the nucleocapsid. Initiation of reverse-transcription occurs first by binding the epsilon loop on the pgRNA genome, and is initiated by protein priming, thereby the 5'-end of (-)DNA is covalently linked to P protein. Partial (+)DNA is synthesized from the (-)DNA template and generates the relaxed circular DNA (RC-DNA) genome. After budding and infection, the RC-DNA migrates in the nucleus, and is converted into a plasmid-like covalently closed circular DNA (cccDNA). The activity of P protein does not seem to be necessary for cccDNA generation, and is presumably released from (+)DNA by host nuclear DNA repair machinery. The chain is Protein P from Hepatitis B virus genotype G (isolate IG29227/2000) (HBV-G).